The primary structure comprises 275 residues: Release factor glutamine methyltransferase (275 aa).

Residues 117 to 121, aspartate 140, tryptophan 168, and asparagine 182 each bind S-adenosyl-L-methionine; that span reads GTGSG. 182-185 is a binding site for substrate; the sequence is NPPY.

The protein belongs to the protein N5-glutamine methyltransferase family. PrmC subfamily.

The enzyme catalyses L-glutaminyl-[peptide chain release factor] + S-adenosyl-L-methionine = N(5)-methyl-L-glutaminyl-[peptide chain release factor] + S-adenosyl-L-homocysteine + H(+). Methylates the class 1 translation termination release factors RF1/PrfA and RF2/PrfB on the glutamine residue of the universally conserved GGQ motif. The sequence is that of Release factor glutamine methyltransferase from Buchnera aphidicola subsp. Schizaphis graminum (strain Sg).